Consider the following 574-residue polypeptide: Acyloxyacyl hydrolase (574 aa).

The N-terminal stretch at 1-22 (MKFPWKVFKTTLLLLLLSHSLA) is a signal peptide. A propeptide spanning residues 23 to 33 (SVPSEDQPGDS) is cleaved from the precursor. The Saposin B-type domain maps to 36–117 (HGQSCLGCVV…YALEFCKRGA (82 aa)). The interval 37-69 (GQSCLGCVVLVSVIEQLAEVHNSSVQVAMERLC) is important for enzyme activity, localization to cytoplasmic vesicles, and protein stability. 8 disulfides stabilise this stretch: Cys-40–Cys-113, Cys-43–Cys-107, Cys-69–Cys-82, Cys-122–Cys-452, Cys-159–Cys-168, Cys-205–Cys-229, Cys-248–Cys-328, and Cys-375–Cys-458. N-linked (GlcNAc...) asparagine glycosylation is present at Asn-58. The segment at 172–176 (ELSIK) is lipopolysaccharide binding. Positions 183, 185, 187, 189, 204, 206, 207, 209, 212, 222, 226, 228, 230, 232, and 244 each coordinate Ca(2+). Asn-206 carries an N-linked (GlcNAc...) asparagine glycan. The active site involves Ser-262. N-linked (GlcNAc...) asparagine glycosylation is found at Asn-408 and Asn-465.

Heterodimer of the large and small subunits; disulfide-linked. It depends on Ca(2+) as a cofactor. Cleaved into a large and a small subunit. In terms of processing, the small subunit is N-glycosylated. In terms of tissue distribution, detected in peritoneal macrophages (at protein level). Strongly expressed in kidney cortex, where it may be produced by proximal tubule cells. In liver, expressed at high levels in Kupffer cells. Expressed by dendritic cells. Detected at low levels in alveolar macrophages.

It is found in the secreted. It localises to the cytoplasmic vesicle. The catalysed reaction is a 3-(acyloxy)acyl derivative of bacterial toxin + H2O = a 3-hydroxyacyl derivative of bacterial toxin + a fatty acid + H(+). Its function is as follows. Removes the secondary (acyloxyacyl-linked) fatty acyl chains from the lipid A region of bacterial lipopolysaccharides (LPS). By breaking down LPS, terminates the host response to bacterial infection and prevents prolonged and damaging inflammatory responses. In peritoneal macrophages, seems to be important for recovery from a state of immune tolerance following infection by Gram-negative bacteria. The chain is Acyloxyacyl hydrolase from Mus musculus (Mouse).